The chain runs to 136 residues: Histone H3.2 (136 aa).

Residues 1 to 20 are disordered; that stretch reads MARTKQTARKSTGGKAPRKQ. Position 5 is an N6-methylated lysine (Lys-5). Lys-10 is subject to N6-acetyllysine; alternate. Lys-10 is subject to N6-methylated lysine; alternate. Ser-11 is subject to Phosphoserine. Residue Thr-12 is modified to Phosphothreonine. Position 15 is an N6-acetyllysine (Lys-15). Lys-19 and Lys-24 each carry N6-acetyllysine; alternate. 2 positions are modified to N6-methylated lysine; alternate: Lys-19 and Lys-24. Lys-37 bears the N6-methylated lysine mark.

It belongs to the histone H3 family. As to quaternary structure, the nucleosome is a histone octamer containing two molecules each of H2A, H2B, H3 and H4 assembled in one H3-H4 heterotetramer and two H2A-H2B heterodimers. The octamer wraps approximately 147 bp of DNA. Acetylation is generally linked to gene activation. Can be acetylated to form H3K9ac, H3K14ac, H3K18ac and H3K23ac. H3K9ac could compete with H3K9me and prevent gene silencing. H3K9ac is restricted to euchromatin. Post-translationally, methylated to form mainly H3K4me, H3K9me, H3K18me, H3K23me and H3K36me. H3K4me1/2/3, H3K9me3 and H3K36me1/2/3 are typical marks for euchromatin, whereas heterochromatic chromocenters are enriched in H3K9me1/2. H2BK143ub1 is probably prerequisite for H3K4me. In terms of processing, can be phosphorylated to form H3S10ph and H3T11ph.

Its subcellular location is the nucleus. The protein localises to the chromosome. In terms of biological role, core component of nucleosome. Nucleosomes wrap and compact DNA into chromatin, limiting DNA accessibility to the cellular machineries which require DNA as a template. Histones thereby play a central role in transcription regulation, DNA repair, DNA replication and chromosomal stability. DNA accessibility is regulated via a complex set of post-translational modifications of histones, also called histone code, and nucleosome remodeling. The protein is Histone H3.2 of Cichorium intybus (Chicory).